The primary structure comprises 245 residues: Membrane-associated progesterone-binding protein 4 (245 aa).

Residues 6–26 (RFLLSPFVGVTFIVVLVSLYF) form a helical membrane-spanning segment. The Cytochrome b5 heme-binding domain occupies 39-138 (KRLFSAEELA…RTYTPVGKLV (100 aa)). The segment at 45-138 (EELALYNGTD…RTYTPVGKLV (94 aa)) is steroid-binding.

It belongs to the cytochrome b5 family. MAPR subfamily.

It is found in the membrane. In Arabidopsis thaliana (Mouse-ear cress), this protein is Membrane-associated progesterone-binding protein 4.